The primary structure comprises 498 residues: Minor fimbrium subunit Mfa1 (498 aa).

Residues 1–19 (MKLNKMFLVGALLSLGFAS) form the signal peptide. Residue Cys-20 is the site of N-palmitoyl cysteine attachment. Cys-20 is lipidated: S-diacylglycerol cysteine. The propeptide occupies 20–50 (CSKEGNGPAPDSSSTADTHMSVSMSLPQHNR). The tract at residues 436–476 (SGNPFVPTDPDPNNPDTPDNPDTPDPEDPDTPNPEEPLPVQ) is disordered.

This sequence belongs to the bacteroidetes fimbrillin superfamily. FimA/Mfa1 family. As to quaternary structure, structural component of the fimbrial stalk. Minor fimbriae are composed of a structural subunit, most often Mfa1, and the accessory subunits Mfa3, Mfa4 and Mfa5. Mfa1 interacts with Mfa2; this anchors the fimbrium in the membrane. Fimbrium assembly occurs by linear, head-to-tail oligomerization of fimbrial subunits. This is mediated via insertion of a C-terminal beta-strand from one subunit into a groove in the N-terminal domain of the following subunit.

Its subcellular location is the fimbrium. The protein localises to the cell outer membrane. Its function is as follows. Structural subunit of the minor fimbriae. These filamentous pili are attached to the cell surface; they mediate biofilm formation, adhesion onto host cells and onto other bacteria that are part of the oral microbiome. They play an important role in invasion of periodontal tissues and are recognized as major virulence factors. Mfa1 orthologs from different strains have highly divergent sequences, and this correlates with pathogenicity. This Porphyromonas gingivalis (Bacteroides gingivalis) protein is Minor fimbrium subunit Mfa1.